The chain runs to 408 residues: Energy-coupling factor transporter ATP-binding protein EcfA1 (408 aa).

In terms of domain architecture, ABC transporter spans 140–374 (IEINHLSFKY…KDFLRNIQLD (235 aa)). 174 to 181 (GHNGSGKS) serves as a coordination point for ATP.

Belongs to the ABC transporter superfamily. Energy-coupling factor EcfA family. Forms a stable energy-coupling factor (ECF) transporter complex composed of 2 membrane-embedded substrate-binding proteins (S component), 2 ATP-binding proteins (A component) and 2 transmembrane proteins (T component).

It localises to the cell membrane. In terms of biological role, ATP-binding (A) component of a common energy-coupling factor (ECF) ABC-transporter complex. Unlike classic ABC transporters this ECF transporter provides the energy necessary to transport a number of different substrates. This is Energy-coupling factor transporter ATP-binding protein EcfA1 from Mycoplasma mycoides subsp. mycoides SC (strain CCUG 32753 / NCTC 10114 / PG1).